A 571-amino-acid polypeptide reads, in one-letter code: Penicillin-binding protein activator LpoA (571 aa).

A signal peptide spans 1 to 26 (MMTILLQHTHLKNRLMPFLLALFLAG). The N-palmitoyl cysteine moiety is linked to residue Cys-27. Residue Cys-27 is the site of S-diacylglycerol cysteine attachment.

This sequence belongs to the LpoA family. Interacts with PBP1a.

The protein resides in the cell outer membrane. Its function is as follows. Regulator of peptidoglycan synthesis that is essential for the function of penicillin-binding protein 1A (PBP1a). The polypeptide is Penicillin-binding protein activator LpoA (Pasteurella multocida (strain Pm70)).